A 160-amino-acid chain; its full sequence is Serine-protein kinase RsbW (160 aa).

The protein belongs to the anti-sigma-factor family.

It catalyses the reaction L-seryl-[protein] + ATP = O-phospho-L-seryl-[protein] + ADP + H(+). The catalysed reaction is L-threonyl-[protein] + ATP = O-phospho-L-threonyl-[protein] + ADP + H(+). In terms of biological role, negative regulator of sigma-B activity. Phosphorylates and inactivates its specific antagonist protein, RsbV. Upon phosphorylation of RsbV, RsbW is released and binds to sigma-B, thereby blocking its ability to form an RNA polymerase holoenzyme (E-sigma-B). The polypeptide is Serine-protein kinase RsbW (Bacillus cereus (strain G9842)).